We begin with the raw amino-acid sequence, 349 residues long: Selenide, water dikinase (349 aa).

The active site involves U19. U19 is a non-standard amino acid (selenocysteine). ATP is bound by residues K22 and 50-52 (LGD). D53 is a Mg(2+) binding site. ATP is bound by residues D69, D92, and 140-142 (GHT). Position 92 (D92) interacts with Mg(2+). Position 246 (D246) interacts with Mg(2+).

The protein belongs to the selenophosphate synthase 1 family. Class I subfamily. As to quaternary structure, homodimer. Requires Mg(2+) as cofactor.

It carries out the reaction hydrogenselenide + ATP + H2O = selenophosphate + AMP + phosphate + 2 H(+). In terms of biological role, synthesizes selenophosphate from selenide and ATP. The protein is Selenide, water dikinase of Methanocaldococcus jannaschii (strain ATCC 43067 / DSM 2661 / JAL-1 / JCM 10045 / NBRC 100440) (Methanococcus jannaschii).